A 903-amino-acid chain; its full sequence is Ras and Rab interactor 2 (903 aa).

Residues 44-73 (NGLEPSETHSMVRHKDGGYSEDKDGKTCPR) form a disordered region. The segment covering 56-73 (RHKDGGYSEDKDGKTCPR) has biased composition (basic and acidic residues). In terms of domain architecture, SH2 spans 97 to 190 (WLQLSLSEEE…VLPFTLKLPY (94 aa)). Disordered regions lie at residues 282-455 (QDLS…EFDR) and 471-491 (EDYEGESDQETMAPPIKSKKK). Positions 306–315 (SPPPRPPPPA) are enriched in pro residues. The span at 318–338 (SLHTSPGLSRTEPQTSMPETV) shows a compositional bias: polar residues. At S366 the chain carries Phosphoserine. A compositionally biased stretch (pro residues) spans 419 to 431 (APPPGSESQPPPC). The segment covering 439–450 (SDMSLSTSSSDS) has biased composition (low complexity). The interval 506–775 (LRKMSGVFSS…ARLLSSEARD (270 aa)) is interaction with RAB5B. Position 510 is a phosphoserine (S510). T518 bears the Phosphothreonine mark. The VPS9 domain occupies 627-766 (DGSWKQLKEN…IKNFQEEQAA (140 aa)). The Ras-associating domain maps to 796 to 887 (FQNYLRVAFQ…FHFVYKRIKS (92 aa)).

It belongs to the RIN (Ras interaction/interference) family. In terms of assembly, homotetramer; probably composed of anti-parallel linkage of two parallel dimers. Interacts with Ras. Interacts with RAB5B, with a much higher affinity for GTP-bound activated RAB5B. Does not interact with other members of the Rab family.

It localises to the cytoplasm. In terms of biological role, ras effector protein. May function as an upstream activator and/or downstream effector for RAB5B in endocytic pathway. May function as a guanine nucleotide exchange (GEF) of RAB5B, required for activating the RAB5 proteins by exchanging bound GDP for free GTP. This chain is Ras and Rab interactor 2 (Rin2), found in Mus musculus (Mouse).